The sequence spans 430 residues: Citrate synthase (430 aa).

Active-site residues include H305 and D363.

The protein belongs to the citrate synthase family. In terms of assembly, homohexamer.

The enzyme catalyses oxaloacetate + acetyl-CoA + H2O = citrate + CoA + H(+). Its pathway is carbohydrate metabolism; tricarboxylic acid cycle; isocitrate from oxaloacetate: step 1/2. Its activity is regulated as follows. Allosterically inhibited by NADH. The sequence is that of Citrate synthase (gltA) from Coxiella burnetii (strain RSA 493 / Nine Mile phase I).